The chain runs to 319 residues: Malate dehydrogenase (319 aa).

Residues 10 to 15 (GAGNIG) and Asp34 contribute to the NAD(+) site. The substrate site is built by Arg83 and Arg89. Residues Asn96 and 119–121 (ITN) contribute to the NAD(+) site. Positions 121 and 152 each coordinate substrate. His176 functions as the Proton acceptor in the catalytic mechanism.

It belongs to the LDH/MDH superfamily. MDH type 3 family.

The catalysed reaction is (S)-malate + NAD(+) = oxaloacetate + NADH + H(+). Functionally, catalyzes the reversible oxidation of malate to oxaloacetate. This Francisella philomiragia subsp. philomiragia (strain ATCC 25017 / CCUG 19701 / FSC 153 / O#319-036) protein is Malate dehydrogenase.